The primary structure comprises 124 residues: Small ribosomal subunit protein uS12 (124 aa).

The tract at residues 1 to 25 (MARINQLVRKPRRARAKKSDVPALE) is disordered. At D89 the chain carries 3-methylthioaspartic acid. The interval 103–124 (DTAGVSGRRRGRSKYGEKKPKE) is disordered.

The protein belongs to the universal ribosomal protein uS12 family. In terms of assembly, part of the 30S ribosomal subunit. Contacts proteins S8 and S17. May interact with IF1 in the 30S initiation complex.

Its function is as follows. With S4 and S5 plays an important role in translational accuracy. Interacts with and stabilizes bases of the 16S rRNA that are involved in tRNA selection in the A site and with the mRNA backbone. Located at the interface of the 30S and 50S subunits, it traverses the body of the 30S subunit contacting proteins on the other side and probably holding the rRNA structure together. The combined cluster of proteins S8, S12 and S17 appears to hold together the shoulder and platform of the 30S subunit. In Coxiella burnetii (strain Dugway 5J108-111), this protein is Small ribosomal subunit protein uS12.